Reading from the N-terminus, the 835-residue chain is Ribonucleoside-diphosphate reductase large subunit (835 aa).

The tract at residues Met-1–Pro-39 is disordered. Residues Thr-262, Ser-277 to Cys-278, Gly-308, Asn-489 to Glu-493, and Pro-666 to Ser-670 each bind substrate. Residues Cys-278 and Cys-506 are joined by a disulfide bond. The active-site Proton acceptor is Asn-489. The active-site Cysteine radical intermediate is Cys-491. The active-site Proton acceptor is Glu-493.

The protein belongs to the ribonucleoside diphosphate reductase large chain family. As to quaternary structure, heterotetramer composed of a homodimer of the large subunit (R1) and a homodimer of the small subunit (R2). Larger multisubunit protein complex are also active, composed of (R1)n(R2)n.

The catalysed reaction is a 2'-deoxyribonucleoside 5'-diphosphate + [thioredoxin]-disulfide + H2O = a ribonucleoside 5'-diphosphate + [thioredoxin]-dithiol. Ribonucleoside-diphosphate reductase holoenzyme provides the precursors necessary for viral DNA synthesis. Allows virus growth in non-dividing cells, as well as reactivation from latency in infected hosts. Catalyzes the biosynthesis of deoxyribonucleotides from the corresponding ribonucleotides. The polypeptide is Ribonucleoside-diphosphate reductase large subunit (Suid herpesvirus 1 (strain Kaplan) (SuHV-1)).